A 232-amino-acid chain; its full sequence is uncharacterized protein (232 aa).

Residues 86–95 (RGLPRPEFKA) are compositionally biased toward basic and acidic residues. The disordered stretch occupies residues 86-107 (RGLPRPEFKANGHPSMDAEADD).

This is an uncharacterized protein from Sinorhizobium fredii (strain NBRC 101917 / NGR234).